A 241-amino-acid chain; its full sequence is MGQKIHPIGFRLGVTKEHKSCWYADKRRYPELLQEDLAIRQHVEKNLSNAGIADIRIERKADQIDLAIHTARPGVVVGRGGSGIEQLRTGLQQTLGENRQIRINVIEVSRVDADAALIAEYITQQLERRVSFRRVVRQAIQRAQRAEVKGIKIQVGGRLNGAEIARTEWVREGRVPLHTLRADIDYAYRTAQTIYGILGVKVWVFKGEIIPGQDEQAMAAPAPTPRKKRRPQQFEDRSNEE.

Positions 39–109 (IRQHVEKNLS…QIRINVIEVS (71 aa)) constitute a KH type-2 domain. Residues 215–241 (EQAMAAPAPTPRKKRRPQQFEDRSNEE) are disordered. Residues 232–241 (QQFEDRSNEE) show a composition bias toward basic and acidic residues.

It belongs to the universal ribosomal protein uS3 family. In terms of assembly, part of the 30S ribosomal subunit. Forms a tight complex with proteins S10 and S14.

Functionally, binds the lower part of the 30S subunit head. Binds mRNA in the 70S ribosome, positioning it for translation. The sequence is that of Small ribosomal subunit protein uS3 from Crocosphaera subtropica (strain ATCC 51142 / BH68) (Cyanothece sp. (strain ATCC 51142)).